We begin with the raw amino-acid sequence, 145 residues long: Allergen Sin a 1 (145 aa).

The segment at 34-62 is disordered; it reads SGSGPSWTLDDEFDFEDDMENPQGPQQRP. A propeptide spanning residues 40–54 is cleaved from the precursor; it reads WTLDDEFDFEDDMEN. The span at 42 to 53 shows a compositional bias: acidic residues; it reads LDDEFDFEDDME.

The protein belongs to the 2S seed storage albumins family. In terms of assembly, the protein consists of two chains linked by disulfide bonds.

In terms of biological role, this is a 2S seed storage protein. This chain is Allergen Sin a 1, found in Sinapis alba (White mustard).